Here is a 218-residue protein sequence, read N- to C-terminus: uncharacterized protein (218 aa).

This is an uncharacterized protein from Methanocaldococcus jannaschii (strain ATCC 43067 / DSM 2661 / JAL-1 / JCM 10045 / NBRC 100440) (Methanococcus jannaschii).